Consider the following 227-residue polypeptide: Cytochrome c oxidase subunit 2 (227 aa).

Over 1–14 the chain is Mitochondrial intermembrane; it reads MAYPMQLGFQDATS. The helical transmembrane segment at 15–45 threads the bilayer; sequence PIMEELLHFHDHTLMIVFLISSLVLYIISLM. Topologically, residues 46 to 59 are mitochondrial matrix; that stretch reads LTTKLTHTSTMDAQ. The helical transmembrane segment at 60–87 threads the bilayer; sequence EVETIWTILPAIILILIALPSLRILYMM. The Mitochondrial intermembrane portion of the chain corresponds to 88–227; it reads DEINNPSLTV…YFEKWSASML (140 aa). Cu cation is bound by residues His161, Cys196, Glu198, Cys200, His204, and Met207. Mg(2+) is bound at residue Glu198. Tyr218 carries the post-translational modification Phosphotyrosine.

It belongs to the cytochrome c oxidase subunit 2 family. In terms of assembly, component of the cytochrome c oxidase (complex IV, CIV), a multisubunit enzyme composed of 14 subunits. The complex is composed of a catalytic core of 3 subunits MT-CO1, MT-CO2 and MT-CO3, encoded in the mitochondrial DNA, and 11 supernumerary subunits COX4I, COX5A, COX5B, COX6A, COX6B, COX6C, COX7A, COX7B, COX7C, COX8 and NDUFA4, which are encoded in the nuclear genome. The complex exists as a monomer or a dimer and forms supercomplexes (SCs) in the inner mitochondrial membrane with NADH-ubiquinone oxidoreductase (complex I, CI) and ubiquinol-cytochrome c oxidoreductase (cytochrome b-c1 complex, complex III, CIII), resulting in different assemblies (supercomplex SCI(1)III(2)IV(1) and megacomplex MCI(2)III(2)IV(2)). Found in a complex with TMEM177, COA6, COX18, COX20, SCO1 and SCO2. Interacts with TMEM177 in a COX20-dependent manner. Interacts with COX20. Interacts with COX16. The cofactor is Cu cation.

The protein localises to the mitochondrion inner membrane. The catalysed reaction is 4 Fe(II)-[cytochrome c] + O2 + 8 H(+)(in) = 4 Fe(III)-[cytochrome c] + 2 H2O + 4 H(+)(out). Component of the cytochrome c oxidase, the last enzyme in the mitochondrial electron transport chain which drives oxidative phosphorylation. The respiratory chain contains 3 multisubunit complexes succinate dehydrogenase (complex II, CII), ubiquinol-cytochrome c oxidoreductase (cytochrome b-c1 complex, complex III, CIII) and cytochrome c oxidase (complex IV, CIV), that cooperate to transfer electrons derived from NADH and succinate to molecular oxygen, creating an electrochemical gradient over the inner membrane that drives transmembrane transport and the ATP synthase. Cytochrome c oxidase is the component of the respiratory chain that catalyzes the reduction of oxygen to water. Electrons originating from reduced cytochrome c in the intermembrane space (IMS) are transferred via the dinuclear copper A center (CU(A)) of subunit 2 and heme A of subunit 1 to the active site in subunit 1, a binuclear center (BNC) formed by heme A3 and copper B (CU(B)). The BNC reduces molecular oxygen to 2 water molecules using 4 electrons from cytochrome c in the IMS and 4 protons from the mitochondrial matrix. This chain is Cytochrome c oxidase subunit 2 (MT-CO2), found in Syncerus caffer (African buffalo).